The primary structure comprises 179 residues: Nuclear transcription factor Y subunit B (179 aa).

The tract at residues Met1–Gln32 is disordered. Residues Pro8–Ser28 show a composition bias toward gly residues. The DNA-binding element occupies Leu36–Ser42. The tract at residues Val63–Ile74 is subunit association domain (SAD). The interval Ser147 to Val179 is disordered.

It belongs to the NFYB/HAP3 subunit family. Heterotrimeric transcription factor composed of three components, NF-YA, NF-YB and NF-YC. NF-YB and NF-YC must interact and dimerize for NF-YA association and DNA binding.

The protein localises to the nucleus. Functionally, component of the NF-Y/HAP transcription factor complex. The NF-Y complex stimulates the transcription of various genes by recognizing and binding to a CCAAT motif in promoters. The polypeptide is Nuclear transcription factor Y subunit B (NFY2) (Zea mays (Maize)).